Reading from the N-terminus, the 989-residue chain is Envelope glycoprotein gp160 (989 aa).

The N-terminal stretch at 1 to 106 (MTSKESKPSR…CLMWEMRKGN (106 aa)) is a signal peptide. Over 107-838 (QCQAEEVIAL…WSSWFSWLKY (732 aa)) the chain is Extracellular. 23 N-linked (GlcNAc...) asparagine; by host glycosylation sites follow: Asn-140, Asn-161, Asn-206, Asn-258, Asn-298, Asn-364, Asn-381, Asn-387, Asn-403, Asn-435, Asn-439, Asn-470, Asn-475, Asn-481, Asn-491, Asn-501, Asn-515, Asn-527, Asn-537, Asn-542, Asn-543, Asn-551, and Asn-568. The segment at 663 to 683 (GIGLVIVLAIMAIIAAAGAGL) is fusion peptide. The stretch at 695–745 (RTAVQSLANATAAQQEVLEASYAMVQHIAKGIRILEARVARVEALVDRMMV) forms a coiled coil. Asn-703 carries N-linked (GlcNAc...) asparagine; by host glycosylation. Positions 729–745 (LEARVARVEALVDRMMV) are immunosuppression. Residues Asn-771, Asn-778, Asn-794, and Asn-828 are each glycosylated (N-linked (GlcNAc...) asparagine; by host). Residues 786 to 821 (EEIEQHEGNLSLLLREAALQVHIAQRDARRIPDAWK) are a coiled coil. The helical transmembrane segment at 839–859 (IPWIIMGIVGLICFRILMCVI) threads the bilayer. Topologically, residues 860 to 989 (SMCLQAYKQV…PTLENDYVEL (130 aa)) are cytoplasmic. The S-palmitoyl cysteine; by host moiety is linked to residue Cys-862.

As to quaternary structure, the mature envelope protein (Env) consists of a trimer of SU-TM heterodimers attached by noncovalent interactions or by a labile interchain disulfide bond. Specific enzymatic cleavages in vivo yield mature proteins. Envelope glycoproteins are synthesized as an inactive precursor that is N-glycosylated and processed likely by host cell furin or by a furin-like protease in the Golgi to yield the mature SU and TM proteins. The cleavage site between SU and TM requires the minimal sequence [KR]-X-[KR]-R. In terms of processing, the transmembrane protein is palmitoylated.

It is found in the virion membrane. The protein localises to the host cell membrane. In terms of biological role, the surface protein (SU) attaches the virus to the host cell by binding to its receptor. This interaction triggers the refolding of the transmembrane protein (TM) and is thought to activate its fusogenic potential by unmasking its fusion peptide. Fusion occurs at the host cell plasma membrane. Its function is as follows. The transmembrane protein (TM) acts as a class I viral fusion protein. Under the current model, the protein has at least 3 conformational states: pre-fusion native state, pre-hairpin intermediate state, and post-fusion hairpin state. During viral and target cell membrane fusion, the coiled coil regions (heptad repeats) assume a trimer-of-hairpins structure, positioning the fusion peptide in close proximity to the C-terminal region of the ectodomain. The formation of this structure appears to drive apposition and subsequent fusion of viral and target cell membranes. Membranes fusion leads to delivery of the nucleocapsid into the cytoplasm. In Ovis aries (Sheep), this protein is Envelope glycoprotein gp160 (env).